The following is a 478-amino-acid chain: NADH-quinone oxidoreductase subunit N 1 (478 aa).

14 consecutive transmembrane segments (helical) span residues 6-26 (TVLP…SGVF), 33-53 (FAIT…LVAA), 71-91 (FADV…VTFN), 99-119 (FEFP…VSAS), 121-141 (LITL…LAAF), 156-176 (FVLG…VYGF), 193-212 (PTAA…GLAF), 244-264 (IAVF…VLGQ), 265-285 (WRDL…IGAI), 299-319 (IGHM…GVSG), 321-341 (LIYL…IIAM), 364-384 (FAFV…LAGF), 388-408 (FYVF…LGII), and 438-458 (AGVS…VFHP).

This sequence belongs to the complex I subunit 2 family. In terms of assembly, NDH-1 is composed of 14 different subunits. Subunits NuoA, H, J, K, L, M, N constitute the membrane sector of the complex.

The protein localises to the cell inner membrane. The catalysed reaction is a quinone + NADH + 5 H(+)(in) = a quinol + NAD(+) + 4 H(+)(out). NDH-1 shuttles electrons from NADH, via FMN and iron-sulfur (Fe-S) centers, to quinones in the respiratory chain. The immediate electron acceptor for the enzyme in this species is believed to be ubiquinone. Couples the redox reaction to proton translocation (for every two electrons transferred, four hydrogen ions are translocated across the cytoplasmic membrane), and thus conserves the redox energy in a proton gradient. The chain is NADH-quinone oxidoreductase subunit N 1 from Acidiphilium cryptum (strain JF-5).